Reading from the N-terminus, the 431-residue chain is Serine/threonine-protein kinase PknA (431 aa).

The Cytoplasmic portion of the chain corresponds to 1–339 (MSPRVGVTLS…RRTFSSGQRA (339 aa)). Residues 13–272 (YRLQRLIATG…SGGPFADAVA (260 aa)) enclose the Protein kinase domain. Residues 19-27 (IATGGMGQV) and Lys42 each bind ATP. Asp141 acts as the Proton acceptor in catalysis. Positions 276–333 (AGRRPPRPSQTPPPGRAAPAAIPSGTTARVAANSAGRTAASRRSRPATGGHRPPRRTF) are disordered. Residues 282-291 (RPSQTPPPGR) are compositionally biased toward pro residues. Residues 292-314 (AAPAAIPSGTTARVAANSAGRTA) are compositionally biased toward low complexity. A helical membrane pass occupies residues 340 to 360 (LLWAAGVLGALAIIIAVLLVI). Residues 361–431 (KAPGDNSPQQ…ASLARYEIAQ (71 aa)) are Extracellular-facing. Residues 366 to 418 (NSPQQAPTPTVTTTGNPPASNTGGTDASPRLNWTERGETRHSGLQSWVVPPTP) form a disordered region. Residues 368-384 (PQQAPTPTVTTTGNPPA) show a composition bias toward low complexity.

This sequence belongs to the protein kinase superfamily. Ser/Thr protein kinase family. In terms of processing, autophosphorylated.

It localises to the cell membrane. The enzyme catalyses L-seryl-[protein] + ATP = O-phospho-L-seryl-[protein] + ADP + H(+). It carries out the reaction L-threonyl-[protein] + ATP = O-phospho-L-threonyl-[protein] + ADP + H(+). Functionally, protein kinase that regulates many aspects of mycobacterial physiology. Is a key component of a signal transduction pathway that regulates cell growth, cell shape and cell division via phosphorylation of target proteins. The chain is Serine/threonine-protein kinase PknA (pknA) from Mycobacterium bovis (strain ATCC BAA-935 / AF2122/97).